The sequence spans 553 residues: Pumilio domain-containing protein 5 (553 aa).

Pumilio repeat units follow at residues 146–184, 185–223, 224–260, 261–296, 297–335, 347–384, 386–421, and 432–472; these read DVVS…VLFD, KLTE…RLVR, KMCD…KLVE, KISS…SFFV, KFLC…HCFN, SVAR…TIIE, CLLR…EMMD, and ETNR…KMVA. The interval 499-514 is RNA-binding; it reads FSSGKKIIESLQKLNV.

In terms of tissue distribution, detected in differentiating oocytes with highest levels observed in developing ooctyes in the distal portion of the proximal gonad.

The protein resides in the cytoplasm. It is found in the P-body. RNA-binding protein that binds to the consensus sequence 5'-CUCUGUAUCUUGU-3' in mRNA 3'-UTRs and modulates mRNA expression and stability. Functions redundantly with puf-6 and puf-7 in oocyte formation and organization, early embryonic cell divisions, and repression of expression of glp-1 and other maternal mRNAs in late oogenesis. The sequence is that of Pumilio domain-containing protein 5 from Caenorhabditis elegans.